The chain runs to 266 residues: 5'-nucleotidase SurE (266 aa).

Residues Asp-8, Asp-9, Ser-40, and Asn-98 each coordinate a divalent metal cation.

Belongs to the SurE nucleotidase family. It depends on a divalent metal cation as a cofactor.

Its subcellular location is the cytoplasm. The enzyme catalyses a ribonucleoside 5'-phosphate + H2O = a ribonucleoside + phosphate. In terms of biological role, nucleotidase that shows phosphatase activity on nucleoside 5'-monophosphates. This Parasynechococcus marenigrum (strain WH8102) protein is 5'-nucleotidase SurE.